We begin with the raw amino-acid sequence, 72 residues long: Translation initiation factor IF-1 (72 aa).

The 72-residue stretch at 1–72 (MSKEDMIEFS…TKGRITFRFK (72 aa)) folds into the S1-like domain.

This sequence belongs to the IF-1 family. As to quaternary structure, component of the 30S ribosomal translation pre-initiation complex which assembles on the 30S ribosome in the order IF-2 and IF-3, IF-1 and N-formylmethionyl-tRNA(fMet); mRNA recruitment can occur at any time during PIC assembly.

It is found in the cytoplasm. In terms of biological role, one of the essential components for the initiation of protein synthesis. Stabilizes the binding of IF-2 and IF-3 on the 30S subunit to which N-formylmethionyl-tRNA(fMet) subsequently binds. Helps modulate mRNA selection, yielding the 30S pre-initiation complex (PIC). Upon addition of the 50S ribosomal subunit IF-1, IF-2 and IF-3 are released leaving the mature 70S translation initiation complex. The polypeptide is Translation initiation factor IF-1 (Acidiphilium cryptum (strain JF-5)).